A 148-amino-acid chain; its full sequence is Cytochrome c-type biogenesis protein CcmE (148 aa).

Residues 1 to 7 are Cytoplasmic-facing; that stretch reads MKPRHKK. The chain crosses the membrane as a helical; Signal-anchor for type II membrane protein span at residues 8 to 28; it reads LAIIASSVTALGVASVLVLNA. Over 29–148 the chain is Periplasmic; that stretch reads FQSNLVFFFS…ADKARKTVMQ (120 aa). Residues H123 and Y127 each contribute to the heme site.

This sequence belongs to the CcmE/CycJ family.

The protein resides in the cell inner membrane. Its function is as follows. Heme chaperone required for the biogenesis of c-type cytochromes. Transiently binds heme delivered by CcmC and transfers the heme to apo-cytochromes in a process facilitated by CcmF and CcmH. In Nitrosospira multiformis (strain ATCC 25196 / NCIMB 11849 / C 71), this protein is Cytochrome c-type biogenesis protein CcmE.